The sequence spans 150 residues: FAD synthase (150 aa).

ATP-binding positions include 16-17 (VF), 21-24 (HVGH), and D102.

This sequence belongs to the archaeal FAD synthase family. In terms of assembly, homodimer. It depends on a divalent metal cation as a cofactor.

It catalyses the reaction FMN + ATP + H(+) = FAD + diphosphate. Its pathway is cofactor biosynthesis; FAD biosynthesis; FAD from FMN: step 1/1. Catalyzes the transfer of the AMP portion of ATP to flavin mononucleotide (FMN) to produce flavin adenine dinucleotide (FAD) coenzyme. The sequence is that of FAD synthase from Thermococcus onnurineus (strain NA1).